Consider the following 648-residue polypeptide: Translation factor GUF1 homolog, mitochondrial (648 aa).

Residues 55–247 (ERVRNFSIIA…AVIERIPSPP (193 aa)) enclose the tr-type G domain. GTP is bound by residues 64–71 (AHVDHGKS), 140–144 (DTPGH), and 194–197 (NKID).

The protein belongs to the TRAFAC class translation factor GTPase superfamily. Classic translation factor GTPase family. LepA subfamily.

The protein localises to the mitochondrion inner membrane. The catalysed reaction is GTP + H2O = GDP + phosphate + H(+). In terms of biological role, promotes mitochondrial protein synthesis. May act as a fidelity factor of the translation reaction, by catalyzing a one-codon backward translocation of tRNAs on improperly translocated ribosomes. Binds to mitochondrial ribosomes in a GTP-dependent manner. This chain is Translation factor GUF1 homolog, mitochondrial, found in Oryza sativa subsp. indica (Rice).